We begin with the raw amino-acid sequence, 345 residues long: Anthranilate phosphoribosyltransferase (345 aa).

Residues glycine 80, 83 to 84 (GD), threonine 88, 90 to 93 (NIST), 108 to 116 (KHGNRSVSS), and serine 120 contribute to the 5-phospho-alpha-D-ribose 1-diphosphate site. Glycine 80 provides a ligand contact to anthranilate. A Mg(2+)-binding site is contributed by serine 92. Anthranilate is bound at residue asparagine 111. Arginine 166 lines the anthranilate pocket. Aspartate 225 and glutamate 226 together coordinate Mg(2+).

Belongs to the anthranilate phosphoribosyltransferase family. In terms of assembly, homodimer. Mg(2+) serves as cofactor.

The catalysed reaction is N-(5-phospho-beta-D-ribosyl)anthranilate + diphosphate = 5-phospho-alpha-D-ribose 1-diphosphate + anthranilate. It participates in amino-acid biosynthesis; L-tryptophan biosynthesis; L-tryptophan from chorismate: step 2/5. Its function is as follows. Catalyzes the transfer of the phosphoribosyl group of 5-phosphorylribose-1-pyrophosphate (PRPP) to anthranilate to yield N-(5'-phosphoribosyl)-anthranilate (PRA). This Acetivibrio thermocellus (strain ATCC 27405 / DSM 1237 / JCM 9322 / NBRC 103400 / NCIMB 10682 / NRRL B-4536 / VPI 7372) (Clostridium thermocellum) protein is Anthranilate phosphoribosyltransferase.